We begin with the raw amino-acid sequence, 259 residues long: Type III pantothenate kinase (259 aa).

An ATP-binding site is contributed by 6–13; the sequence is DAGNTNIV. Substrate is bound by residues tyrosine 100 and 107-110; that span reads GADR. Residue aspartate 109 is the Proton acceptor of the active site. Aspartate 129 contacts K(+). Residue threonine 132 coordinates ATP. A substrate-binding site is contributed by threonine 184.

This sequence belongs to the type III pantothenate kinase family. As to quaternary structure, homodimer. It depends on NH4(+) as a cofactor. The cofactor is K(+).

It is found in the cytoplasm. The catalysed reaction is (R)-pantothenate + ATP = (R)-4'-phosphopantothenate + ADP + H(+). It functions in the pathway cofactor biosynthesis; coenzyme A biosynthesis; CoA from (R)-pantothenate: step 1/5. Functionally, catalyzes the phosphorylation of pantothenate (Pan), the first step in CoA biosynthesis. The sequence is that of Type III pantothenate kinase from Clostridium novyi (strain NT).